The sequence spans 164 residues: R-phycoerythrin alpha chain (164 aa).

The (2R,3E)-phycoerythrobilin site is built by Asn47, Lys81, Cys82, Arg84, His88, Arg137, Cys139, and Arg142.

This sequence belongs to the phycobiliprotein family. As to quaternary structure, heterododecamer of 6 alpha and 6 beta chains. The basic functional unit of phycobiliproteins is a ring-shaped hexamer formed from two back-to-back trimers contacting via the alpha chain subunits. The trimers are composed of alpha/beta subunit heterodimers arranged around a three-fold axis of symmetry. The phycoerythrins also contain a gamma subunit which is located in the center of the hexamer. In terms of processing, contains two covalently linked phycoerythrobilin chromophores.

The protein resides in the plastid. The protein localises to the chloroplast thylakoid membrane. Its function is as follows. Light-harvesting photosynthetic tetrapyrrole chromophore-protein from the phycobiliprotein complex. The protein is R-phycoerythrin alpha chain (rpeA) of Agarophyton chilense (Red seaweed).